A 464-amino-acid chain; its full sequence is CD-NTase-associated protein 4 (464 aa).

Residues 1–228 (MSASLLEKQS…FENFICHALE (228 aa)) are N-terminal endonuclease domain. Residues 229-464 (EDRTQWLSDP…EYMPTAELNI (236 aa)) form a C-terminal SAVED domain region.

Belongs to the Cap4 nuclease family. As to quaternary structure, a monomer in the absence of cAAA, in its presence it forms oligomers.

DNase activity is activated upon ligand binding. Its function is as follows. Effector DNase of a CBASS antivirus system. CBASS (cyclic oligonucleotide-based antiphage signaling system) provides immunity against bacteriophage. The CD-NTase protein synthesizes cyclic nucleotides in response to infection; these serve as specific second messenger signals. The signals activate a diverse range of effectors, leading to bacterial cell death and thus abortive phage infection. A type II-C CBASS system. Functionally, probably in the presence of its endogenous cyclic nucleotide (synthesized by the cognate CD-NTase protein in the CBASS operon), or of 2',3',3'-cyclic AMP-AMP-AMP (cAAA) synthesized by Acinetobacter sp. ATCC 27244, endonucleolytically degrades dsDNA in a non-sequence specific manner. It is not activated by other cyclic nucleotides. This is CD-NTase-associated protein 4 from Moraxella osloensis.